A 510-amino-acid chain; its full sequence is Cytochrome P450 11B2, mitochondrial (510 aa).

Residues 1 to 34 (MGACDNDFIELHSRVTADVWLARPWQCLHRTRAL) constitute a mitochondrion transit peptide. Residue Phe-391 coordinates 21-hydroxyprogesterone. Cys-457 is a binding site for heme.

This sequence belongs to the cytochrome P450 family. Heme is required as a cofactor. As to expression, adrenal cortex.

The protein resides in the mitochondrion inner membrane. It catalyses the reaction a steroid + 2 reduced [adrenodoxin] + O2 + 2 H(+) = an 11beta-hydroxysteroid + 2 oxidized [adrenodoxin] + H2O. The enzyme catalyses 21-hydroxyprogesterone + 2 reduced [adrenodoxin] + O2 + 2 H(+) = corticosterone + 2 oxidized [adrenodoxin] + H2O. It carries out the reaction corticosterone + 2 reduced [adrenodoxin] + O2 + 2 H(+) = 18-hydroxycorticosterone + 2 oxidized [adrenodoxin] + H2O. The catalysed reaction is 18-hydroxycorticosterone + 2 reduced [adrenodoxin] + O2 + 2 H(+) = aldosterone + 2 oxidized [adrenodoxin] + 2 H2O. It catalyses the reaction 11-deoxycortisol + 2 reduced [adrenodoxin] + O2 + 2 H(+) = cortisol + 2 oxidized [adrenodoxin] + H2O. The enzyme catalyses cortisol + 2 reduced [adrenodoxin] + O2 + 2 H(+) = 18-hydroxycortisol + 2 oxidized [adrenodoxin] + H2O. It carries out the reaction 21-hydroxyprogesterone + 2 reduced [adrenodoxin] + O2 + 2 H(+) = 18-hydroxy-11-deoxycorticosterone + 2 oxidized [adrenodoxin] + H2O. The catalysed reaction is 18-hydroxycortisol + 2 reduced [adrenodoxin] + O2 + 2 H(+) = 18-oxocortisol + 2 oxidized [adrenodoxin] + 2 H2O. It functions in the pathway steroid biosynthesis. In terms of biological role, a cytochrome P450 monooxygenase that catalyzes the biosynthesis of aldosterone, the main mineralocorticoid responsible for salt and water homeostasis. Catalyzes three sequential oxidative reactions of 11-deoxycorticosterone (21-hydroxyprogesterone), namely 11-beta hydroxylation, followed by two successive oxidations at C18 yielding 18-hydroxy and then 18-oxo intermediates (that do not leave the enzyme active site during the consecutive hydroxylation reactions), and end with the formation of aldosterone. Can also produce 18-hydroxycortisol and 18-oxocortisol, derived from successive oxidations of cortisol at C18, normally found at very low levels, but significantly increased in primary aldosteronism, the most common form of secondary hypertension. Mechanistically, uses molecular oxygen inserting one oxygen atom into a substrate and reducing the second into a water molecule. Two electrons are provided by NADPH via a two-protein mitochondrial transfer system comprising flavoprotein FDXR (adrenodoxin/ferredoxin reductase) and nonheme iron-sulfur protein FDX1 or FDX2 (adrenodoxin/ferredoxin). Could also be involved in the androgen metabolic pathway. The chain is Cytochrome P450 11B2, mitochondrial (Cyp11b2) from Rattus norvegicus (Rat).